A 1225-amino-acid chain; its full sequence is Cohesin subunit SA-3 (1225 aa).

Residues 1-97 (MSSPLQRAVG…HSRKQSEPPA (97 aa)) form a disordered region. The segment covering 15 to 26 (ALSASSSSSASL) has biased composition (low complexity). Over residues 45–54 (LADEDTDFED) the composition is skewed to acidic residues. 2 stretches are compositionally biased toward basic residues: residues 59-69 (NVKKRAAKRPP) and 76-90 (KHPK…RHSR). Positions 309–394 (FVHRYRDVLP…SRFKDRMVSM (86 aa)) constitute an SCD domain. 3 disordered regions span residues 546-567 (SEGH…KERK), 1063-1113 (AETS…STAV), and 1177-1225 (EEDE…IEDF). Residues 1078-1089 (VEGPAKPNREDV) are compositionally biased toward basic and acidic residues. Residues 1090 to 1099 (SSSQEESLQL) are compositionally biased toward low complexity. The segment covering 1177 to 1191 (EEDEEEELEIQDESN) has biased composition (acidic residues). A compositionally biased stretch (polar residues) spans 1198 to 1209 (DMQASSYSSTSE). Position 1203 is a phosphoserine (S1203). Residues 1216–1225 (DSTELDIEDF) show a composition bias toward acidic residues.

It belongs to the SCC3 family. As to quaternary structure, component of the meiosis-specific cohesin complex, which also contains the SMC1 (SMC1A or SMC1B) and SMC3 heterodimer. Such complex likely contains RAD21, or the meiosis-specific related protein REC8. Interacts with CCDC79/TERB1; recruiting cohesin to telomeres to develop structural rigidity. Phosphorylated. Testis specific.

The protein resides in the nucleus. Its subcellular location is the chromosome. It localises to the centromere. Meiosis specific component of cohesin complex. The cohesin complex is required for the cohesion of sister chromatids after DNA replication. The cohesin complex apparently forms a large proteinaceous ring within which sister chromatids can be trapped. At anaphase, the complex is cleaved and dissociates from chromatin, allowing sister chromatids to segregate. The meiosis-specific cohesin complex probably replaces mitosis specific cohesin complex when it dissociates from chromatin during prophase I. This Homo sapiens (Human) protein is Cohesin subunit SA-3 (STAG3).